The sequence spans 130 residues: Holin-like protein CidA (130 aa).

4 helical membrane passes run F6 to E26, L31 to F51, F65 to A85, and I93 to I113.

Belongs to the CidA/LrgA family. CidA subfamily.

The protein resides in the cell membrane. Increases the activity of extracellular murein hydrolases possibly by mediating their export via hole formation. Inhibited by the antiholin-like proteins LrgAB. In an unstressed cell, the LrgAB products probably inhibit the function of the CidAB proteins. When a cell is stressed by the addition of antibiotics or by other factors in the environment, the CidAB proteins possibly oligomerize within the bacterial cell membrane, creating lesions that disrupt the proton motive force, which in turn results in loss of cell viability. These lesions are also hypothesized to regulate the subsequent cell lysis by either allowing the murein hydrolases access to the cell wall substrate and/or regulating their activity by a possible change in the cell wall pH that results from loss of membrane potential. The sequence is that of Holin-like protein CidA from Staphylococcus epidermidis (strain ATCC 35984 / DSM 28319 / BCRC 17069 / CCUG 31568 / BM 3577 / RP62A).